The chain runs to 2453 residues: Tyrosine-protein phosphatase non-receptor type 13 (2453 aa).

In terms of domain architecture, KIND spans 3–190 (VSLAEALEVR…SGTDPLSRSS (188 aa)). The tract at residues 183-227 (TDPLSRSSEQKPDRSQAIRDRLRGKGLPTGRSSTSDALDTHEAPL) is disordered. A compositionally biased stretch (basic and acidic residues) spans 190–205 (SEQKPDRSQAIRDRLR). Serine 240 bears the Phosphoserine mark. Positions 253-285 (EDYLKDTPSDNNSRHEDSETFSSPYQFKTSTPQ) are disordered. A compositionally biased stretch (basic and acidic residues) spans 256 to 270 (LKDTPSDNNSRHEDS). Positions 272-285 (TFSSPYQFKTSTPQ) are enriched in polar residues. Phosphoserine is present on residues serine 297 and serine 298. Residues 429–457 (SEASKRFESSSGLPGVDETGQTRPSRQYE) form a disordered region. Over residues 447–457 (TGQTRPSRQYE) the composition is skewed to polar residues. Residues 458–493 (TSLEGNLINQDIMLRRQEEEMMQLQARMALRQSRLS) adopt a coiled-coil conformation. One can recognise an FERM domain in the interval 565–865 (RKVNIRLLSG…SQHKFQLQMR (301 aa)). Phosphoserine occurs at positions 883, 890, 901, 904, and 907. Over residues 944-957 (KEKTDKASWEEKPR) the composition is skewed to basic and acidic residues. 2 disordered regions span residues 944-966 (KEKTDKASWEEKPRGMSKSYHDL) and 1007-1063 (LAGL…VPFK). Residues serine 1021 and serine 1025 each carry the phosphoserine modification. Positions 1025–1034 (SPERRNHESD) are enriched in basic and acidic residues. The segment covering 1049–1058 (SLPSSGKSSS) has biased composition (low complexity). Serine 1076 bears the Phosphoserine mark. The 87-residue stretch at 1084-1170 (LVNLKKDPKH…DVTLVISQPK (87 aa)) folds into the PDZ 1 domain. Disordered regions lie at residues 1199–1356 (DSAM…GDTF) and 1441–1478 (GQVPTSRERDPAGPQSPPPDQDAQRQAPEKVAKQTPHV). Serine 1221 carries the post-translational modification Phosphoserine. 2 stretches are compositionally biased toward polar residues: residues 1242 to 1252 (ESASLSQSQVN) and 1267 to 1279 (PQHSSPSPSVTTK). Position 1270 is a phosphoserine (serine 1270). Positions 1297–1315 (GISDLIEHLDCADSDKDDS) are enriched in basic and acidic residues. A compositionally biased stretch (low complexity) spans 1331–1341 (SSSLSTSNKTS). The region spanning 1357 to 1442 (EVELAKTDGS…VVHLLLEKGQ (86 aa)) is the PDZ 2 domain. Over residues 1467–1478 (APEKVAKQTPHV) the composition is skewed to basic and acidic residues. A PDZ 3 domain is found at 1491–1579 (EVKLFKNSSG…EVSLLLCRPA (89 aa)). The span at 1602–1629 (LNSSKETSQPSSSVEQGASSDDNGVSGK) shows a compositional bias: polar residues. Disordered stretches follow at residues 1602 to 1662 (LNSS…AKMP) and 1695 to 1726 (KLESESSHPPPLDVSPGQTCQPPAECAPSDAT). Basic and acidic residues predominate over residues 1638–1655 (SRRESYSDHSESGEDDSV). PDZ domains follow at residues 1764-1845 (LITL…GRIL) and 1857-1942 (LPDI…TRDG). Disordered regions lie at residues 1991-2024 (EAVCPAGEGSSSQMKESAGLTETKESNSRDDDIY) and 2051-2139 (RHAT…DPPF). Over residues 2012 to 2021 (ETKESNSRDD) the composition is skewed to basic and acidic residues. A Tyrosine-protein phosphatase domain is found at 2180 to 2434 (PSKELENLQE…VFCYQVILYV (255 aa)). Substrate is bound by residues aspartate 2345, 2375–2381 (CSAGIGR), and glutamine 2419. Cysteine 2375 functions as the Phosphocysteine intermediate in the catalytic mechanism.

Belongs to the protein-tyrosine phosphatase family. Non-receptor class subfamily. Interacts (via the first PDZ domain) with PLEKHA1 and PLEKHA2. Interacts (via the second PDZ domain) with TNFRSF6 (Fas receptor) (via C-terminus). Interacts (via the second PDZ domain) with TRIP6 (via the third LIM domain and C-terminus). Interacts (via the third PDZ domain) with NGFR (via C-terminal SVP motif) and PKN2 (via C-terminus). Interacts (via the second or fourth PDZ domains) with PDLIM4 (via C-terminus only or via combined C-terminus and LIM domain, but not LIM domain only). Found in a complex with PDLIM4 and TRIP6. Interacts with PDLIM4; this interaction results in dephosphorylation of SRC 'Tyr-419' by this protein leading to its inactivation. Interacts with BRD7. Interacts with RAPGEF6. Interacts with ARHGAP29. Interacts with PIK3R2; dephosphorylates PIK3R2. Interacts with FBXL2. Interacts (via the FERM domain) with ENTR1. Found in a complex with ENTR1, PTPN13 and GIT1. In terms of tissue distribution, expressed predominantly in kidney and, to a lesser extent, in lung, heart, brain and testis.

The protein localises to the cytoplasm. It is found in the cytoskeleton. Its subcellular location is the nucleus. The protein resides in the cell projection. It localises to the lamellipodium. It carries out the reaction O-phospho-L-tyrosyl-[protein] + H2O = L-tyrosyl-[protein] + phosphate. Functionally, tyrosine phosphatase which negatively regulates FAS-induced apoptosis and NGFR-mediated pro-apoptotic signaling. May regulate phosphoinositide 3-kinase (PI3K) signaling through dephosphorylation of PIK3R2. The chain is Tyrosine-protein phosphatase non-receptor type 13 (Ptpn13) from Mus musculus (Mouse).